A 234-amino-acid polypeptide reads, in one-letter code: Large ribosomal subunit protein uL1 (234 aa).

Belongs to the universal ribosomal protein uL1 family. In terms of assembly, part of the 50S ribosomal subunit.

Binds directly to 23S rRNA. The L1 stalk is quite mobile in the ribosome, and is involved in E site tRNA release. Functionally, protein L1 is also a translational repressor protein, it controls the translation of the L11 operon by binding to its mRNA. This Desulfatibacillum aliphaticivorans protein is Large ribosomal subunit protein uL1.